A 109-amino-acid chain; its full sequence is NAD(P)H-quinone oxidoreductase subunit M (109 aa).

The protein belongs to the complex I NdhM subunit family. NDH-1 can be composed of about 15 different subunits; different subcomplexes with different compositions have been identified which probably have different functions.

It localises to the cellular thylakoid membrane. It catalyses the reaction a plastoquinone + NADH + (n+1) H(+)(in) = a plastoquinol + NAD(+) + n H(+)(out). The catalysed reaction is a plastoquinone + NADPH + (n+1) H(+)(in) = a plastoquinol + NADP(+) + n H(+)(out). In terms of biological role, NDH-1 shuttles electrons from an unknown electron donor, via FMN and iron-sulfur (Fe-S) centers, to quinones in the respiratory and/or the photosynthetic chain. The immediate electron acceptor for the enzyme in this species is believed to be plastoquinone. Couples the redox reaction to proton translocation, and thus conserves the redox energy in a proton gradient. Cyanobacterial NDH-1 also plays a role in inorganic carbon-concentration. This chain is NAD(P)H-quinone oxidoreductase subunit M, found in Microcystis aeruginosa (strain NIES-843 / IAM M-2473).